Reading from the N-terminus, the 382-residue chain is Methylthioribose-1-phosphate isomerase (382 aa).

The active-site Proton donor is aspartate 258.

Belongs to the eIF-2B alpha/beta/delta subunits family. MtnA subfamily.

It is found in the cytoplasm. Its subcellular location is the nucleus. The catalysed reaction is 5-(methylsulfanyl)-alpha-D-ribose 1-phosphate = 5-(methylsulfanyl)-D-ribulose 1-phosphate. It participates in amino-acid biosynthesis; L-methionine biosynthesis via salvage pathway; L-methionine from S-methyl-5-thio-alpha-D-ribose 1-phosphate: step 1/6. Catalyzes the interconversion of methylthioribose-1-phosphate (MTR-1-P) into methylthioribulose-1-phosphate (MTRu-1-P). This is Methylthioribose-1-phosphate isomerase from Laccaria bicolor (strain S238N-H82 / ATCC MYA-4686) (Bicoloured deceiver).